We begin with the raw amino-acid sequence, 418 residues long: Tyrosine--tRNA ligase (418 aa).

L-tyrosine is bound at residue Tyr-34. Residues 39-48 (PTADSLHLGH) carry the 'HIGH' region motif. 2 residues coordinate L-tyrosine: Tyr-169 and Gln-173. Residues 229-233 (KFGKS) carry the 'KMSKS' region motif. Lys-232 contributes to the ATP binding site. An S4 RNA-binding domain is found at 352–418 (LNLVDMLVTA…GKKKYAVLTY (67 aa)).

It belongs to the class-I aminoacyl-tRNA synthetase family. TyrS type 1 subfamily. As to quaternary structure, homodimer.

Its subcellular location is the cytoplasm. It catalyses the reaction tRNA(Tyr) + L-tyrosine + ATP = L-tyrosyl-tRNA(Tyr) + AMP + diphosphate + H(+). Functionally, catalyzes the attachment of tyrosine to tRNA(Tyr) in a two-step reaction: tyrosine is first activated by ATP to form Tyr-AMP and then transferred to the acceptor end of tRNA(Tyr). The polypeptide is Tyrosine--tRNA ligase (Streptococcus pyogenes serotype M6 (strain ATCC BAA-946 / MGAS10394)).